We begin with the raw amino-acid sequence, 207 residues long: Urease accessory protein UreE (207 aa).

Positions 170–194 (EHHGHSHSHSHDHDHDHDHDHDHQH) are enriched in basic and acidic residues. The segment at 170 to 207 (EHHGHSHSHSHDHDHDHDHDHDHQHGPCCSHGHHHGHR) is disordered.

This sequence belongs to the UreE family.

It localises to the cytoplasm. Its function is as follows. Involved in urease metallocenter assembly. Binds nickel. Probably functions as a nickel donor during metallocenter assembly. In Burkholderia pseudomallei (strain 1106a), this protein is Urease accessory protein UreE.